The chain runs to 348 residues: Anthranilate phosphoribosyltransferase (348 aa).

5-phospho-alpha-D-ribose 1-diphosphate-binding positions include Gly89, 92 to 93 (GD), Thr97, 99 to 102 (NIST), 117 to 125 (KHGNRSVSS), and Ser129. Gly89 provides a ligand contact to anthranilate. A Mg(2+)-binding site is contributed by Ser101. Asn120 provides a ligand contact to anthranilate. Arg175 contacts anthranilate. Mg(2+) is bound by residues Asp233 and Glu234.

The protein belongs to the anthranilate phosphoribosyltransferase family. In terms of assembly, homodimer. The cofactor is Mg(2+).

The catalysed reaction is N-(5-phospho-beta-D-ribosyl)anthranilate + diphosphate = 5-phospho-alpha-D-ribose 1-diphosphate + anthranilate. It participates in amino-acid biosynthesis; L-tryptophan biosynthesis; L-tryptophan from chorismate: step 2/5. In terms of biological role, catalyzes the transfer of the phosphoribosyl group of 5-phosphorylribose-1-pyrophosphate (PRPP) to anthranilate to yield N-(5'-phosphoribosyl)-anthranilate (PRA). This is Anthranilate phosphoribosyltransferase from Shewanella putrefaciens (strain CN-32 / ATCC BAA-453).